The sequence spans 273 residues: 2,3,4,5-tetrahydropyridine-2,6-dicarboxylate N-succinyltransferase (273 aa).

Substrate is bound by residues arginine 104 and aspartate 141.

This sequence belongs to the transferase hexapeptide repeat family. Homotrimer.

It localises to the cytoplasm. It carries out the reaction (S)-2,3,4,5-tetrahydrodipicolinate + succinyl-CoA + H2O = (S)-2-succinylamino-6-oxoheptanedioate + CoA. It participates in amino-acid biosynthesis; L-lysine biosynthesis via DAP pathway; LL-2,6-diaminopimelate from (S)-tetrahydrodipicolinate (succinylase route): step 1/3. The protein is 2,3,4,5-tetrahydropyridine-2,6-dicarboxylate N-succinyltransferase of Blochmanniella pennsylvanica (strain BPEN).